The chain runs to 146 residues: Hemoglobin subunit beta (146 aa).

Residue Val-1 is modified to N-acetylvaline. The 145-residue stretch at 2–146 (HLSGEEKGAV…VATALAHKYH (145 aa)) folds into the Globin domain. Thr-12 bears the Phosphothreonine mark. Ser-44 carries the post-translational modification Phosphoserine. Lys-59 is modified (N6-acetyllysine). His-63 lines the heme b pocket. Residue Lys-82 is modified to N6-acetyllysine. His-92 contributes to the heme b binding site. Cys-93 carries the post-translational modification S-nitrosocysteine. Lys-144 is modified (N6-acetyllysine).

This sequence belongs to the globin family. As to quaternary structure, heterotetramer of two alpha chains and two beta chains. Red blood cells.

Involved in oxygen transport from the lung to the various peripheral tissues. This chain is Hemoglobin subunit beta (HBB), found in Tadarida brasiliensis (Brazilian free-tailed bat).